The following is a 230-amino-acid chain: NADH dehydrogenase [ubiquinone] iron-sulfur protein 8, mitochondrial (230 aa).

A mitochondrion-targeting transit peptide spans 1-42 (MAAILARKSLSALRSRQLVLAGQAWQQGANTSNGTLLGTRTF). 4Fe-4S ferredoxin-type domains follow at residues 122–151 (RRYPTGEERCIACKLCEAICPAQAITIEAE) and 161–190 (TRYDIDMTKCIYCGFCQEACPVDAIVEGPN). [4Fe-4S] cluster-binding residues include Cys-131, Cys-134, Cys-137, Cys-141, Cys-170, Cys-173, Cys-176, and Cys-180.

The protein belongs to the complex I 23 kDa subunit family. As to quaternary structure, complex I is composed of about 45 different subunits. This is a component of the iron-sulfur (IP) fragment of the enzyme. The cofactor is [4Fe-4S] cluster.

It localises to the mitochondrion. It catalyses the reaction a ubiquinone + NADH + 5 H(+)(in) = a ubiquinol + NAD(+) + 4 H(+)(out). Functionally, core subunit of the mitochondrial membrane respiratory chain NADH dehydrogenase (Complex I) that is believed to belong to the minimal assembly required for catalysis. Complex I functions in the transfer of electrons from NADH to the respiratory chain. The immediate electron acceptor for the enzyme is believed to be ubiquinone. May donate electrons to ubiquinone. This chain is NADH dehydrogenase [ubiquinone] iron-sulfur protein 8, mitochondrial, found in Nicotiana tabacum (Common tobacco).